The following is a 70-amino-acid chain: DNA gyrase inhibitor YacG (70 aa).

4 residues coordinate Zn(2+): Cys20, Cys23, Cys35, and Cys39.

This sequence belongs to the DNA gyrase inhibitor YacG family. In terms of assembly, interacts with GyrB. Zn(2+) serves as cofactor.

Inhibits all the catalytic activities of DNA gyrase by preventing its interaction with DNA. Acts by binding directly to the C-terminal domain of GyrB, which probably disrupts DNA binding by the gyrase. This Rhizobium etli (strain CIAT 652) protein is DNA gyrase inhibitor YacG.